The primary structure comprises 416 residues: Exodeoxyribonuclease 7 large subunit (416 aa).

The protein belongs to the XseA family. Heterooligomer composed of large and small subunits.

The protein resides in the cytoplasm. It catalyses the reaction Exonucleolytic cleavage in either 5'- to 3'- or 3'- to 5'-direction to yield nucleoside 5'-phosphates.. Functionally, bidirectionally degrades single-stranded DNA into large acid-insoluble oligonucleotides, which are then degraded further into small acid-soluble oligonucleotides. This chain is Exodeoxyribonuclease 7 large subunit, found in Nitratiruptor sp. (strain SB155-2).